Here is a 375-residue protein sequence, read N- to C-terminus: Protein NDRG3 (375 aa).

A disordered region spans residues Arg-326–Cys-375. Low complexity predominate over residues Ser-348–Gln-363. The segment covering Ile-364–Cys-375 has biased composition (polar residues).

Belongs to the NDRG family.

The protein is Protein NDRG3 of Xenopus laevis (African clawed frog).